A 318-amino-acid polypeptide reads, in one-letter code: Probable 3-hydroxyisobutyrate dehydrogenase-like 3, mitochondrial (318 aa).

NAD(+)-binding positions include Thr35 to Ala64 and Ser129. Lys203 is an active-site residue. Lys271 is an NAD(+) binding site.

Belongs to the HIBADH-related family. 3-hydroxyisobutyrate dehydrogenase subfamily.

It is found in the mitochondrion. The enzyme catalyses 3-hydroxy-2-methylpropanoate + NAD(+) = 2-methyl-3-oxopropanoate + NADH + H(+). The protein operates within amino-acid degradation; L-valine degradation. The polypeptide is Probable 3-hydroxyisobutyrate dehydrogenase-like 3, mitochondrial (Arabidopsis thaliana (Mouse-ear cress)).